The following is a 59-amino-acid chain: Large ribosomal subunit protein bL32 (59 aa).

The disordered stretch occupies residues 1–28 (MAVQQNKKSPSKRGMHRAHDFLTDPPLA).

The protein belongs to the bacterial ribosomal protein bL32 family.

This Aromatoleum aromaticum (strain DSM 19018 / LMG 30748 / EbN1) (Azoarcus sp. (strain EbN1)) protein is Large ribosomal subunit protein bL32.